The following is a 119-amino-acid chain: Large ribosomal subunit protein uL18 (119 aa).

This sequence belongs to the universal ribosomal protein uL18 family. Part of the 50S ribosomal subunit; part of the 5S rRNA/L5/L18/L25 subcomplex. Contacts the 5S and 23S rRNAs.

This is one of the proteins that bind and probably mediate the attachment of the 5S RNA into the large ribosomal subunit, where it forms part of the central protuberance. This is Large ribosomal subunit protein uL18 from Jannaschia sp. (strain CCS1).